Here is a 193-residue protein sequence, read N- to C-terminus: Pyridoxal 5'-phosphate synthase subunit PdxT (193 aa).

Residue 48–50 (GES) coordinates L-glutamine. The Nucleophile role is filled by C80. Residues R109 and 137-138 (IR) each bind L-glutamine. Catalysis depends on charge relay system residues H173 and E175.

Belongs to the glutaminase PdxT/SNO family. As to quaternary structure, in the presence of PdxS, forms a dodecamer of heterodimers. Only shows activity in the heterodimer.

It catalyses the reaction aldehydo-D-ribose 5-phosphate + D-glyceraldehyde 3-phosphate + L-glutamine = pyridoxal 5'-phosphate + L-glutamate + phosphate + 3 H2O + H(+). It carries out the reaction L-glutamine + H2O = L-glutamate + NH4(+). It functions in the pathway cofactor biosynthesis; pyridoxal 5'-phosphate biosynthesis. Catalyzes the hydrolysis of glutamine to glutamate and ammonia as part of the biosynthesis of pyridoxal 5'-phosphate. The resulting ammonia molecule is channeled to the active site of PdxS. The sequence is that of Pyridoxal 5'-phosphate synthase subunit PdxT from Mycobacteroides abscessus (strain ATCC 19977 / DSM 44196 / CCUG 20993 / CIP 104536 / JCM 13569 / NCTC 13031 / TMC 1543 / L948) (Mycobacterium abscessus).